Here is a 349-residue protein sequence, read N- to C-terminus: tRNA pseudouridine synthase D (349 aa).

A substrate-binding site is contributed by phenylalanine 27. Residue aspartate 80 is the Nucleophile of the active site. Asparagine 129 is a binding site for substrate. A TRUD domain is found at 155–303 (GVPNYFGAQR…VEAARRAMLL (149 aa)). Position 329 (phenylalanine 329) interacts with substrate.

It belongs to the pseudouridine synthase TruD family.

The catalysed reaction is uridine(13) in tRNA = pseudouridine(13) in tRNA. In terms of biological role, responsible for synthesis of pseudouridine from uracil-13 in transfer RNAs. The chain is tRNA pseudouridine synthase D from Escherichia coli O7:K1 (strain IAI39 / ExPEC).